The following is a 1150-amino-acid chain: RNA polymerase-associated protein CTR9 (1150 aa).

TPR repeat units follow at residues 143–176, 177–210, 212–245, 247–282, 320–353, 355–388, 432–464, 471–504, 594–627, 643–677, 679–711, 712–745, and 748–781; these read VRAWFYLFERDKSTNKYELADQQFNYVVKTNPKN, VLPLIGKAVIAFNKKDYKTAIYYFRKAIRQCRHT, ADLRVGIGHCFAKMGMMDKAKTAFERAMEIEPYN, SAMCGLGIILLNTYDHDSLKHAVSLFGRSYNLQTDH, AEAFYQMGRCRHAQGQFDGAYKYYYQARQANNGE, TLAHYGLGQMYIHRNEIEEAIKCFDTVHKRLPNN, YEACIDLAQLLEATDPKRSLELYENAIDLLVTN, PEMLNNVGALYMSMKQYEKAEHHFKRAKERLEEQ, PIVWTLIGNLHFAKNEWMPAQKKFEFILSKIFNN, FEQLLNPSRKKEDEKKYIDRALQMYQKALKLQPKN, YAANGIGCVLAYKRNWNDARDVFSQVRESTSEF, YDVWLNIAHVCMEREQWMAAVQMYSSAMKKFRKE, and STLQHYLAKAYYRANMLNEAKEALECAMLDQLDN. Coiled-coil stretches lie at residues 848 to 916 and 972 to 1028; these read AEEA…NLRL and ERRE…AKQS. A disordered region spans residues 935 to 1150; sequence KRRGGGGRKR…KKKVIESDSD (216 aa). A compositionally biased stretch (basic residues) spans 975–992; sequence ERRKKDKAAKKASRKKRE. 4 stretches are compositionally biased toward basic and acidic residues: residues 993 to 1005, 1013 to 1024, 1060 to 1084, and 1132 to 1150; these read RRDSGGPDSNRRD, EERDRKLQEKLS, DPRPPVDEFDSPTRTDSDSDRETTT, and RDSDGSDAPKKKVIESDSD.

As to quaternary structure, component of the PAF1 complex which consists of at least cdc-73, ctr-9, leo-1, pafo-1 and rtfo-1.

The protein localises to the nucleus. In terms of biological role, component of the PAF1 complex which is a multifunctional complex involved in transcription initiation via genetic interactions with TATA-binding proteins, elongation and transcription-coupled histone modification. Ctr-9 is required for epidermal microtubule organization during morphogenesis. The protein is RNA polymerase-associated protein CTR9 of Caenorhabditis elegans.